The primary structure comprises 278 residues: Potassium/proton antiporter CemA (278 aa).

The next 4 membrane-spanning stretches (helical) occupy residues 61–81, 154–174, 203–223, and 238–258; these read VVFL…FLFG, CAIT…SILI, IILF…EVII, and FIFV…KYWI.

Belongs to the CemA family.

The protein resides in the plastid. The protein localises to the chloroplast inner membrane. It carries out the reaction K(+)(in) + H(+)(out) = K(+)(out) + H(+)(in). In terms of biological role, contributes to K(+)/H(+) antiport activity by supporting proton efflux to control proton extrusion and homeostasis in chloroplasts in a light-dependent manner to modulate photosynthesis. Prevents excessive induction of non-photochemical quenching (NPQ) under continuous-light conditions. Indirectly promotes efficient inorganic carbon uptake into chloroplasts. This chain is Potassium/proton antiporter CemA, found in Gracilaria tenuistipitata var. liui (Red alga).